The sequence spans 384 residues: S-adenosylmethionine synthase (384 aa).

Residue histidine 15 coordinates ATP. Residue aspartate 17 coordinates Mg(2+). Glutamate 43 contributes to the K(+) binding site. Residues glutamate 56 and glutamine 99 each coordinate L-methionine. The tract at residues 99 to 109 (QSPDINQGVDR) is flexible loop. ATP is bound by residues 164–166 (DAK), 231–232 (RF), aspartate 240, 246–247 (RK), alanine 263, and lysine 267. Position 240 (aspartate 240) interacts with L-methionine. Lysine 271 contributes to the L-methionine binding site.

Belongs to the AdoMet synthase family. In terms of assembly, homotetramer; dimer of dimers. It depends on Mg(2+) as a cofactor. K(+) is required as a cofactor.

Its subcellular location is the cytoplasm. The catalysed reaction is L-methionine + ATP + H2O = S-adenosyl-L-methionine + phosphate + diphosphate. The protein operates within amino-acid biosynthesis; S-adenosyl-L-methionine biosynthesis; S-adenosyl-L-methionine from L-methionine: step 1/1. In terms of biological role, catalyzes the formation of S-adenosylmethionine (AdoMet) from methionine and ATP. The overall synthetic reaction is composed of two sequential steps, AdoMet formation and the subsequent tripolyphosphate hydrolysis which occurs prior to release of AdoMet from the enzyme. The polypeptide is S-adenosylmethionine synthase (Shewanella piezotolerans (strain WP3 / JCM 13877)).